The sequence spans 228 residues: E3 ubiquitin-protein ligase RNF114 (228 aa).

The RING-type zinc-finger motif lies at 29 to 68; it reads CPVCLEVYEKPVQVPCGHVFCSACLQECLKPKKPVCGVCR. Residues cysteine 91 and cysteine 94 each contribute to the Zn(2+) site. The C2HC RNF-type zinc-finger motif lies at 91–110; it reads CHGCRKKFFLSKIRSHVATC. Lysine 102 is subject to N6-acetyllysine. Residues histidine 106 and cysteine 110 each contribute to the Zn(2+) site. Lysine 112 is subject to N6-acetyllysine.

As to quaternary structure, interacts with XAF1, the interaction increases XAF1 stability and proapoptotic effects, and may regulate IFN signaling. In terms of processing, autoubiquitinated. Polyubiquitinated in the presence of E2 enzymes UBE2D1, UBE2D2 and UBE2D3, but only monoubiquitinated in the presence of UBE2E1.

It is found in the cytoplasm. The protein localises to the nucleus. It catalyses the reaction S-ubiquitinyl-[E2 ubiquitin-conjugating enzyme]-L-cysteine + [acceptor protein]-L-lysine = [E2 ubiquitin-conjugating enzyme]-L-cysteine + N(6)-ubiquitinyl-[acceptor protein]-L-lysine.. It participates in protein modification; protein ubiquitination. Its function is as follows. E3 ubiquitin-protein ligase that promotes the ubiquitination of various substrates. In turn, participates in the regulation of many biological processes including cell cycle, apoptosis, osteoclastogenesis as well as innate or adaptive immunity. Acts as negative regulator of NF-kappa-B-dependent transcription by promoting the ubiquitination and stabilization of the NF-kappa-B inhibitor TNFAIP3. May promote the ubiquitination of TRAF6 as well. Also acts as a negative regulator of T-cell activation. Inhibits cellular dsRNA responses and interferon production by targeting MAVS component for proteasomal degradation. Ubiquitinates the CDK inhibitor CDKN1A leading to its degradationand probably also CDKN1B and CDKN1C. This activity stimulates cell cycle G1-to-S phase transition and suppresses cellular senescence. May play a role in spermatogenesis. This is E3 ubiquitin-protein ligase RNF114 (RNF114) from Pan troglodytes (Chimpanzee).